The primary structure comprises 63 residues: MAATCDVCAKHPSFGYSVSHSHVRTKRRWNPNIQKVRTVVNGTPKRLNVCTSCLKAGKVTRAL.

Belongs to the bacterial ribosomal protein bL28 family.

This is Large ribosomal subunit protein bL28 from Beutenbergia cavernae (strain ATCC BAA-8 / DSM 12333 / CCUG 43141 / JCM 11478 / NBRC 16432 / NCIMB 13614 / HKI 0122).